A 727-amino-acid chain; its full sequence is Protein TITANIA (727 aa).

The segment at 1–136 (MFGDSDGSKD…LASLLQPVPA (136 aa)) is disordered. Pro residues predominate over residues 14–25 (GAPPSTTDPPFP). Basic and acidic residues predominate over residues 67–88 (DDGKHCVERDFLHLSAPKRGDP). Residues 104-117 (DSLQLSLSLNSDGP) show a composition bias toward low complexity. The segment at 406-470 (ACTCSVCHKF…QFQCLACNHS (65 aa)) adopts a PHD-type zinc-finger fold. Residues 629–697 (VKCKEAEAKL…LEELKMLENS (69 aa)) adopt a coiled-coil conformation.

Widely expressed.

It is found in the nucleus. In terms of biological role, probable transcription factor that functions as a regulator of metal transporter genes responsible for essential metals delivery to shoots and normal plant growth. Required for the maintenance of metal transporter gene expression, such as IRT1, IRT2, ZIP1, ZIP9, NRAMP1 and NRAMP5. The chain is Protein TITANIA from Oryza sativa subsp. japonica (Rice).